The following is a 331-amino-acid chain: Hydroxyacylglutathione hydrolase 1, mitochondrial (331 aa).

A mitochondrion-targeting transit peptide spans 1–76; sequence MPVISKASST…HFCSISNMPS (76 aa). The Zn(2+) site is built by H131 and H133. Fe cation contacts are provided by D135 and H136. Zn(2+) is bound by residues H189 and D208. D208 contributes to the Fe cation binding site. Substrate is bound at residue 246–248; sequence REN.

The protein belongs to the metallo-beta-lactamase superfamily. Glyoxalase II family. Fe(2+) serves as cofactor. Fe(3+) is required as a cofactor. Requires Zn(2+) as cofactor. In terms of tissue distribution, mainly expressed in roots, flowers and flower buds. Also detected in leaves.

The protein resides in the mitochondrion. It catalyses the reaction an S-(2-hydroxyacyl)glutathione + H2O = a 2-hydroxy carboxylate + glutathione + H(+). It participates in secondary metabolite metabolism; methylglyoxal degradation; (R)-lactate from methylglyoxal: step 2/2. Thiolesterase that catalyzes the hydrolysis of S-D-lactoyl-glutathione to form glutathione and D-lactic acid. The sequence is that of Hydroxyacylglutathione hydrolase 1, mitochondrial (GLX2-1) from Arabidopsis thaliana (Mouse-ear cress).